We begin with the raw amino-acid sequence, 1104 residues long: Transposon Ty4-P Gag-Pol polyprotein (1104 aa).

Positions 48–112 (VKQYQRNLNR…VEKIQLLETN (65 aa)) form a coiled coil. The tract at residues 381–501 (QQQLKSSAKE…KTKMVLSRKY (121 aa)) is ty4 protease. D414 functions as the For protease activity; shared with dimeric partner in the catalytic mechanism. The segment at 539–599 (AIKPTSSPGF…EPNEFWCQTC (61 aa)) is integrase-type zinc finger-like. Residues 619–786 (TDHEPGSSWC…LPLKAISRQP (168 aa)) form the Integrase catalytic domain. Mg(2+) is bound by residues D630 and D695.

The protease is a homodimer, whose active site consists of two apposed aspartic acid residues. In terms of processing, proteolytically processed into capsid protein (CA), Ty4 protease (PR), integrase (IN) and reverse transcriptase/ribonuclease H (RT) proteins. Initially, virus-like particles (VLPs) are composed of the structural unprocessed proteins Gag and Gag-Pol, and also contain the host initiator methionine tRNA (tRNA(i)-Met) which serves as a primer for minus-strand DNA synthesis, and a dimer of genomic Ty RNA. Processing of the polyproteins occurs within the particle and proceeds by an ordered pathway, called maturation. First, the protease (PR) is released by autocatalytic cleavage of the Gag-Pol polyprotein, and this cleavage is a prerequisite for subsequent processing at the remaining sites to release the mature structural and catalytic proteins. Maturation takes place prior to the RT reaction and is required to produce transposition-competent VLPs.

The protein resides in the cytoplasm. The protein localises to the nucleus. The catalysed reaction is DNA(n) + a 2'-deoxyribonucleoside 5'-triphosphate = DNA(n+1) + diphosphate. The enzyme catalyses Endonucleolytic cleavage to 5'-phosphomonoester.. Capsid protein (CA) is the structural component of the virus-like particle (VLP), forming the shell that encapsulates the retrotransposons dimeric RNA genome. Its function is as follows. The aspartyl protease (PR) mediates the proteolytic cleavages of the Gag and Gag-Pol polyproteins after assembly of the VLP. In terms of biological role, reverse transcriptase/ribonuclease H (RT) is a multifunctional enzyme that catalyzes the conversion of the retro-elements RNA genome into dsDNA within the VLP. The enzyme displays a DNA polymerase activity that can copy either DNA or RNA templates, and a ribonuclease H (RNase H) activity that cleaves the RNA strand of RNA-DNA heteroduplexes during plus-strand synthesis and hydrolyzes RNA primers. The conversion leads to a linear dsDNA copy of the retrotransposon that includes long terminal repeats (LTRs) at both ends. Functionally, integrase (IN) targets the VLP to the nucleus, where a subparticle preintegration complex (PIC) containing at least integrase and the newly synthesized dsDNA copy of the retrotransposon must transit the nuclear membrane. Once in the nucleus, integrase performs the integration of the dsDNA into the host genome. This Saccharomyces cerevisiae (strain ATCC 204508 / S288c) (Baker's yeast) protein is Transposon Ty4-P Gag-Pol polyprotein (TY4B-P).